Consider the following 246-residue polypeptide: Isoprenyl transferase (246 aa).

Residue Asp-18 is part of the active site. Residue Asp-18 coordinates Mg(2+). Residues 19 to 22, Trp-23, Arg-31, His-35, and 63 to 65 each bind substrate; these read GNGR and SAE. Catalysis depends on Asn-66, which acts as the Proton acceptor. Residues Trp-67, Arg-69, Arg-186, and 192-194 each bind substrate; that span reads RIS. Glu-205 contacts Mg(2+).

This sequence belongs to the UPP synthase family. Homodimer. Requires Mg(2+) as cofactor.

Its function is as follows. Catalyzes the condensation of isopentenyl diphosphate (IPP) with allylic pyrophosphates generating different type of terpenoids. The polypeptide is Isoprenyl transferase (Geobacter sulfurreducens (strain ATCC 51573 / DSM 12127 / PCA)).